A 198-amino-acid polypeptide reads, in one-letter code: Na(+)-translocating NADH-quinone reductase subunit E (198 aa).

6 helical membrane passes run 11–31 (SVFI…FLAV), 35–55 (VSTA…AVPV), 77–97 (FLNF…LEMV), 110–130 (GIFL…SFMV), 140–160 (VVYG…LAGI), and 176–196 (LGIT…FSGI).

Belongs to the NqrDE/RnfAE family. Composed of six subunits; NqrA, NqrB, NqrC, NqrD, NqrE and NqrF.

It is found in the cell inner membrane. It catalyses the reaction a ubiquinone + n Na(+)(in) + NADH + H(+) = a ubiquinol + n Na(+)(out) + NAD(+). In terms of biological role, NQR complex catalyzes the reduction of ubiquinone-1 to ubiquinol by two successive reactions, coupled with the transport of Na(+) ions from the cytoplasm to the periplasm. NqrA to NqrE are probably involved in the second step, the conversion of ubisemiquinone to ubiquinol. This Pasteurella multocida (strain Pm70) protein is Na(+)-translocating NADH-quinone reductase subunit E.